The following is a 342-amino-acid chain: AA9 family lytic polysaccharide monooxygenase H (342 aa).

The signal sequence occupies residues 1–19 (MSKASALLAGLTGAALVAA). 2 residues coordinate Cu(2+): His20 and His106. Disulfide bonds link Cys75/Cys195 and Cys117/Cys121. O2 is bound by residues His181 and Gln190. Tyr192 contributes to the Cu(2+) binding site. Positions 263–308 (ATVPGGGGANPTATTTAATSAAPSTTLRTTTTSAAQTTAPPSGDVQ) are disordered. Residues 272-305 (NPTATTTAATSAAPSTTLRTTTTSAAQTTAPPSG) are compositionally biased toward low complexity. The region spanning 306–342 (DVQTKYGQCGGNGWTGPTVCAPGSSCSVLNEWYSQCL) is the CBM1 domain.

It belongs to the polysaccharide monooxygenase AA9 family. Requires Cu(2+) as cofactor.

It is found in the secreted. It carries out the reaction [(1-&gt;4)-beta-D-glucosyl]n+m + reduced acceptor + O2 = 4-dehydro-beta-D-glucosyl-[(1-&gt;4)-beta-D-glucosyl]n-1 + [(1-&gt;4)-beta-D-glucosyl]m + acceptor + H2O.. With respect to regulation, the presence of lignin presents a significant source of antioxidants, which probably increase the activity by trapping liberated oxidized fragments. Lytic polysaccharide monooxygenase (LPMO) that depolymerizes crystalline and amorphous polysaccharides via the oxidation of scissile alpha- or beta-(1-4)-glycosidic bonds, yielding C1 or C4 oxidation products. Catalysis by LPMOs requires the reduction of the active-site copper from Cu(II) to Cu(I) by a reducing agent and H(2)O(2) or O(2) as a cosubstrate. Hydrolyzes weakly barley beta-glucan, carboxymethyl cellulose, lichenan, wheat arabinoxylan and birchwood xylan. Stimulates the hydrolysis of lignocellulosic substrates (such as hydrothermal pretreated wheat straw or steam-pretreated spruce), when combined with other cellulolytic enzymes. This chain is AA9 family lytic polysaccharide monooxygenase H, found in Thermothelomyces thermophilus (strain ATCC 42464 / BCRC 31852 / DSM 1799) (Sporotrichum thermophile).